The following is a 217-amino-acid chain: EF-hand domain-containing protein D2 homolog (217 aa).

Residues 1-28 (MSVSSNASSASNKDSVDSPSSTTNTDSS) show a composition bias toward low complexity. The disordered stretch occupies residues 1-29 (MSVSSNASSASNKDSVDSPSSTTNTDSSE). EF-hand domains are found at residues 69-104 (NQIK…LGAP) and 105-140 (QTHL…AQAG). Ca(2+) contacts are provided by Asp82, Asp86, Glu93, Asp118, Asp120, Asp122, Lys124, and Glu129. A compositionally biased stretch (basic and acidic residues) spans 191–204 (EQEERRREEEERAQ). Residues 191–217 (EQEERRREEEERAQRRQQFQQRAAIFQ) form a disordered region. Residues 206–217 (RQQFQQRAAIFQ) are compositionally biased toward low complexity.

This Drosophila melanogaster (Fruit fly) protein is EF-hand domain-containing protein D2 homolog (Swip-1).